A 374-amino-acid polypeptide reads, in one-letter code: Flagellar P-ring protein (374 aa).

The first 29 residues, 1–29, serve as a signal peptide directing secretion; that stretch reads MSGLGFTGVVRIAVMALLALAFLGAPAHA. Polar residues predominate over residues 296–311; it reads ESPQVSQPNPLSNGRT. Residues 296–316 form a disordered region; sequence ESPQVSQPNPLSNGRTVMTPR.

The protein belongs to the FlgI family. As to quaternary structure, the basal body constitutes a major portion of the flagellar organelle and consists of four rings (L,P,S, and M) mounted on a central rod.

The protein localises to the periplasm. It is found in the bacterial flagellum basal body. Assembles around the rod to form the L-ring and probably protects the motor/basal body from shearing forces during rotation. In Nitrobacter winogradskyi (strain ATCC 25391 / DSM 10237 / CIP 104748 / NCIMB 11846 / Nb-255), this protein is Flagellar P-ring protein.